The following is a 547-amino-acid chain: ATP synthase subunit alpha (547 aa).

173 to 180 (GDRATGKT) is a binding site for ATP. Residues 526–547 (PEAEALADEDVEQEQIVRQKRG) form a disordered region. The segment covering 528–538 (AEALADEDVEQ) has biased composition (acidic residues).

It belongs to the ATPase alpha/beta chains family. As to quaternary structure, F-type ATPases have 2 components, CF(1) - the catalytic core - and CF(0) - the membrane proton channel. CF(1) has five subunits: alpha(3), beta(3), gamma(1), delta(1), epsilon(1). CF(0) has three main subunits: a(1), b(2) and c(9-12). The alpha and beta chains form an alternating ring which encloses part of the gamma chain. CF(1) is attached to CF(0) by a central stalk formed by the gamma and epsilon chains, while a peripheral stalk is formed by the delta and b chains.

Its subcellular location is the cell membrane. It catalyses the reaction ATP + H2O + 4 H(+)(in) = ADP + phosphate + 5 H(+)(out). Functionally, produces ATP from ADP in the presence of a proton gradient across the membrane. The alpha chain is a regulatory subunit. The protein is ATP synthase subunit alpha of Nocardioides sp. (strain ATCC BAA-499 / JS614).